The sequence spans 357 residues: Cinnamyl alcohol dehydrogenase 1 (357 aa).

Cys-47 contacts Zn(2+). Thr-49 is an NADP(+) binding site. Zn(2+)-binding residues include His-69, Glu-70, Cys-100, Cys-103, Cys-106, Cys-114, and Cys-163. NADP(+) contacts are provided by residues Thr-167, Gly-188–Gly-193, Ser-211–Lys-216, Thr-251, Gly-275, and Ser-298–Ile-300.

The protein belongs to the zinc-containing alcohol dehydrogenase family. As to quaternary structure, homodimer. Zn(2+) is required as a cofactor. As to expression, expressed in leaves, mainly in peltate glands.

The enzyme catalyses (E)-cinnamyl alcohol + NADP(+) = (E)-cinnamaldehyde + NADPH + H(+). It carries out the reaction (E)-coniferol + NADP(+) = (E)-coniferaldehyde + NADPH + H(+). The catalysed reaction is (E)-sinapyl alcohol + NADP(+) = (E)-sinapaldehyde + NADPH + H(+). It catalyses the reaction (E)-4-coumaroyl alcohol + NADP(+) = (E)-4-coumaraldehyde + NADPH + H(+). The enzyme catalyses (E)-caffeyl alcohol + NADP(+) = (E)-caffeyl aldehyde + NADPH + H(+). Its pathway is aromatic compound metabolism; phenylpropanoid biosynthesis. 60% inhibition by 5 mM Ca(+), Mg(+) or Cu(+). Involved in the production of citral, a mixture of geranial and neral with a strong lemony scent. Reversibly oxidizes geraniol to produce geranial at half the efficiency compared with its activity with cinnamyl alcohol. Does not use nerol and neral as substrates. The sequence is that of Cinnamyl alcohol dehydrogenase 1 (CAD1) from Ocimum basilicum (Sweet basil).